The sequence spans 161 residues: Cysteine dioxygenase (161 aa).

Residues H75, H77, and H125 each coordinate Fe cation.

It belongs to the cysteine dioxygenase family. Requires Fe cation as cofactor.

The enzyme catalyses L-cysteine + O2 = 3-sulfino-L-alanine + H(+). The protein is Cysteine dioxygenase (cdoA) of Bacillus subtilis (strain 168).